The chain runs to 93 residues: Integration host factor subunit beta (93 aa).

Belongs to the bacterial histone-like protein family. Heterodimer of an alpha and a beta chain.

This protein is one of the two subunits of integration host factor, a specific DNA-binding protein that functions in genetic recombination as well as in transcriptional and translational control. The protein is Integration host factor subunit beta (ihfB) of Cereibacter sphaeroides (strain ATCC 17023 / DSM 158 / JCM 6121 / CCUG 31486 / LMG 2827 / NBRC 12203 / NCIMB 8253 / ATH 2.4.1.) (Rhodobacter sphaeroides).